The following is a 265-amino-acid chain: Type II pantothenate kinase (265 aa).

6-13 lines the ATP pocket; the sequence is DAGGTLIK. Residue Glu-70 is the Proton acceptor of the active site. ATP is bound by residues Thr-99, 121–125, Tyr-137, and Ser-225; that span reads GGMIQ.

Belongs to the type II pantothenate kinase family. As to quaternary structure, homodimer.

It localises to the cytoplasm. The enzyme catalyses (R)-pantothenate + ATP = (R)-4'-phosphopantothenate + ADP + H(+). Its pathway is cofactor biosynthesis; coenzyme A biosynthesis; CoA from (R)-pantothenate: step 1/5. Functionally, catalyzes the phosphorylation of pantothenate (Pan), the first step in CoA biosynthesis. This chain is Type II pantothenate kinase, found in Staphylococcus saprophyticus subsp. saprophyticus (strain ATCC 15305 / DSM 20229 / NCIMB 8711 / NCTC 7292 / S-41).